The primary structure comprises 342 residues: ATPase asna-1 (342 aa).

26–33 lines the ATP pocket; that stretch reads KGGVGKTT. The active site involves Asp55. ATP contacts are provided by Glu243 and Asn270. The Zn(2+) site is built by Cys285 and Cys288.

This sequence belongs to the arsA ATPase family. Homodimer.

It localises to the cytoplasm. The protein resides in the endoplasmic reticulum. Its function is as follows. ATPase required for the post-translational delivery of tail-anchored (TA) proteins to the endoplasmic reticulum. Recognizes and selectively binds the transmembrane domain of TA proteins in the cytosol. This complex then targets to the endoplasmic reticulum by membrane-bound receptors, where the tail-anchored protein is released for insertion. This process is regulated by ATP binding and hydrolysis. ATP binding drives the homodimer towards the closed dimer state, facilitating recognition of newly synthesized TA membrane proteins. ATP hydrolysis is required for insertion. Subsequently, the homodimer reverts towards the open dimer state, lowering its affinity for the membrane-bound receptor, and returning it to the cytosol to initiate a new round of targeting. May be involved in insulin signaling. This chain is ATPase asna-1, found in Caenorhabditis elegans.